The sequence spans 343 residues: Phosphate acyltransferase (343 aa).

This sequence belongs to the PlsX family. Homodimer. Probably interacts with PlsY.

The protein localises to the cytoplasm. The catalysed reaction is a fatty acyl-[ACP] + phosphate = an acyl phosphate + holo-[ACP]. It functions in the pathway lipid metabolism; phospholipid metabolism. Functionally, catalyzes the reversible formation of acyl-phosphate (acyl-PO(4)) from acyl-[acyl-carrier-protein] (acyl-ACP). This enzyme utilizes acyl-ACP as fatty acyl donor, but not acyl-CoA. In Coxiella burnetii (strain CbuG_Q212) (Coxiella burnetii (strain Q212)), this protein is Phosphate acyltransferase.